A 1003-amino-acid polypeptide reads, in one-letter code: MSEDSEKEDYSDRTISDEDESDEDNFMKFVNEDIHQCALLTADSISDPFFPRTTQILLEYQLGRWVPRLRKPRDLYGVSSSGPLSPTRWPYHCEVIDEKIEHIDWTPSNPEPMYIPTGLEVEPLYANSKEETVVYLAEDAYKEPCFVYSRVGGNRTPLKQPVDNCDDTLMFEARFESGNLQKVVKVGEYEYQLTVRPDLFTNKHTQWYYFQVTNTQAGIVYRFTITNFTKPASLYNRGMRPLFYSEKEASAHNIGWQRIGDQIKYYRNNQGQDRHHHFSLTWTFQFPHSKDTCYFAHCYPYTYTNLQEYLSGINNDPVRSKFCKIRVLCHTIARNMVYILTITTPLKNSESRKRKAVILTARVHPGETNSSWIMKGFLDYILGNSSDAKLLRDTFVFKVVPMLNPDGVIVGNYRCSLAGRDLNRNYTSLLKESFPSVWYTRNMIRRLMEKREVILYCDLHGHSKKENIFMYGCDGSDRCKALYLQQRIFPLMLSKNCPDKFSFSSCKFNIQKSKEGTGRVVMWKMGIRNSFTMEATFCGSTLGNKRGTHFNTKDLESMGYHFCDSLLDYCDPDRTKYYQCLKELDEMEKHINLEKVIDDSDTSLKEITLDLETSSHASDSSESNDSQTDLLKLNSQIKTKKKQLKTKKERNSTIERHQNIREEEQEVCDKGHLVQRHKESDSDVTDTRPSISDDCIFDYFRRQLPNQGFFKILGLKFYCGYTHMISQTVIQKLSRDQQRCVLGTDKKNQETVQPRNNDLYGNCIKVTSLKCPLNKQTPIWTEKTRIPTEDLHHNLKSNMKECPSFQSKKADINWTDDEKRIYRDKNIAQTQEILQYLLPIMRSTKNVQTTQIKEVFNPRTSFQIQHQQKPSSNINIRKCSTSWTPPRNLPLISQRTLIVSTSKWLQPLDWKSSESSLPLGGPKKRRKYSRVKATKTKDMKAASSKWEMTPSSSEKDADKSLQAEGSSQQGTMQTAPHPTKTKGEQPKKKHGQPAFHLKLQRDT.

The tract at residues Met1–Glu23 is disordered. Positions Tyr299–Cys570 constitute a Peptidase M14 domain. Residues His364, Glu367, and His460 each contribute to the Zn(2+) site. The Proton donor/acceptor role is filled by Glu534. 2 disordered regions span residues Lys642 to Glu662 and Lys911 to Thr1003. Residues Glu649–Glu662 show a composition bias toward basic and acidic residues. The segment covering Pro922–Thr934 has biased composition (basic residues). The segment covering Ala963–Pro976 has biased composition (polar residues).

It belongs to the peptidase M14 family. The cofactor is Zn(2+).

It is found in the cytoplasm. The protein resides in the cytosol. It carries out the reaction (L-glutamyl)(n+1)-gamma-L-glutamyl-L-glutamyl-[protein] + H2O = (L-glutamyl)(n)-gamma-L-glutamyl-L-glutamyl-[protein] + L-glutamate. In terms of biological role, metallocarboxypeptidase that mediates deglutamylation of tubulin and non-tubulin target proteins. Catalyzes the removal of polyglutamate side chains present on the gamma-carboxyl group of glutamate residues within the C-terminal tail of tubulin protein. Specifically cleaves tubulin long-side-chains, while it is not able to remove the branching point glutamate. Also catalyzes the removal of polyglutamate residues from the carboxy-terminus of non-tubulin proteins such as MYLK. May catalyze the hydrolysis of aspartate from the carboxy-terminus of target proteins. Does not show detyrosinase or deglycylase activities from the carboxy-terminus of target proteins. This Bos taurus (Bovine) protein is Cytosolic carboxypeptidase 3 (AGBL3).